A 427-amino-acid chain; its full sequence is 3-phosphoshikimate 1-carboxyvinyltransferase (427 aa).

Residues lysine 20, serine 21, and arginine 25 each coordinate 3-phosphoshikimate. Residue lysine 20 participates in phosphoenolpyruvate binding. The phosphoenolpyruvate site is built by glycine 92 and arginine 120. Residues serine 166, glutamine 168, aspartate 312, and lysine 339 each contribute to the 3-phosphoshikimate site. Residue glutamine 168 participates in phosphoenolpyruvate binding. Aspartate 312 acts as the Proton acceptor in catalysis. Residues arginine 343 and arginine 385 each coordinate phosphoenolpyruvate.

Belongs to the EPSP synthase family. Monomer.

Its subcellular location is the cytoplasm. It carries out the reaction 3-phosphoshikimate + phosphoenolpyruvate = 5-O-(1-carboxyvinyl)-3-phosphoshikimate + phosphate. It functions in the pathway metabolic intermediate biosynthesis; chorismate biosynthesis; chorismate from D-erythrose 4-phosphate and phosphoenolpyruvate: step 6/7. Catalyzes the transfer of the enolpyruvyl moiety of phosphoenolpyruvate (PEP) to the 5-hydroxyl of shikimate-3-phosphate (S3P) to produce enolpyruvyl shikimate-3-phosphate and inorganic phosphate. The polypeptide is 3-phosphoshikimate 1-carboxyvinyltransferase (Streptococcus agalactiae serotype Ia (strain ATCC 27591 / A909 / CDC SS700)).